Here is a 272-residue protein sequence, read N- to C-terminus: Hemin import ATP-binding protein HmuV (272 aa).

An ABC transporter domain is found at 2–255; that stretch reads LNADHLHVAR…EPIARCYGFR (254 aa). 34 to 41 contacts ATP; that stretch reads GRNGAGKS.

This sequence belongs to the ABC transporter superfamily. Heme (hemin) importer (TC 3.A.1.14.5) family. In terms of assembly, the complex is composed of two ATP-binding proteins (HmuV), two transmembrane proteins (HmuU) and a solute-binding protein (HmuT).

The protein resides in the cell inner membrane. Its function is as follows. Part of the ABC transporter complex HmuTUV involved in hemin import. Responsible for energy coupling to the transport system. In Burkholderia mallei (strain ATCC 23344), this protein is Hemin import ATP-binding protein HmuV.